The primary structure comprises 126 residues: MADLAKLVDDLSSLTVLEAAELAKMLEEKWGVSAAAAVAVAAGPAAGGAAAPAAEEQTEFTVVLAAAGDKKIEVIKEVRAITGLGLKEAKDLVEGAPKPVKEGVSKDDAAKLKAQLEKAGAKVELK.

This sequence belongs to the bacterial ribosomal protein bL12 family. As to quaternary structure, homodimer. Part of the ribosomal stalk of the 50S ribosomal subunit. Forms a multimeric L10(L12)X complex, where L10 forms an elongated spine to which 2 to 4 L12 dimers bind in a sequential fashion. Binds GTP-bound translation factors.

In terms of biological role, forms part of the ribosomal stalk which helps the ribosome interact with GTP-bound translation factors. Is thus essential for accurate translation. This is Large ribosomal subunit protein bL12 from Methylobacterium sp. (strain 4-46).